Here is a 28-residue protein sequence, read N- to C-terminus: Conotoxin Cl6a (28 aa).

3 disulfide bridges follow: cysteine 3–cysteine 13, cysteine 7–cysteine 19, and cysteine 12–cysteine 24.

Expressed by the venom duct.

Its subcellular location is the secreted. This chain is Conotoxin Cl6a, found in Californiconus californicus (California cone).